Here is a 1125-residue protein sequence, read N- to C-terminus: Probable inorganic carbon transporter subunit DabA (1125 aa).

Residues Cys578, Asp580, His769, and Cys784 each coordinate Zn(2+). The disordered stretch occupies residues 1106–1125 (SDPRPPALVEPKQTETHHAA).

The protein belongs to the inorganic carbon transporter (TC 9.A.2) DabA family. As to quaternary structure, forms a complex with DabB. Zn(2+) is required as a cofactor.

The protein resides in the cell inner membrane. Part of an energy-coupled inorganic carbon pump. In Nitrosococcus oceani (strain ATCC 19707 / BCRC 17464 / JCM 30415 / NCIMB 11848 / C-107), this protein is Probable inorganic carbon transporter subunit DabA.